The sequence spans 603 residues: DNA mismatch repair protein MutL (603 aa).

This sequence belongs to the DNA mismatch repair MutL/HexB family.

Its function is as follows. This protein is involved in the repair of mismatches in DNA. It is required for dam-dependent methyl-directed DNA mismatch repair. May act as a 'molecular matchmaker', a protein that promotes the formation of a stable complex between two or more DNA-binding proteins in an ATP-dependent manner without itself being part of a final effector complex. The protein is DNA mismatch repair protein MutL of Nitrobacter hamburgensis (strain DSM 10229 / NCIMB 13809 / X14).